A 215-amino-acid chain; its full sequence is Cytochrome b6 (215 aa).

A helical membrane pass occupies residues 32–52 (IFHCLGGITLTCFLVQVATGF). Cysteine 35 provides a ligand contact to heme c. Heme b is bound by residues histidine 86 and histidine 100. 3 helical membrane-spanning segments follow: residues 90–110 (ASMM…TGGF), 116–136 (LTWV…VTGY), and 186–206 (LHTF…FPMI). 2 residues coordinate heme b: histidine 187 and histidine 202.

Belongs to the cytochrome b family. PetB subfamily. The 4 large subunits of the cytochrome b6-f complex are cytochrome b6, subunit IV (17 kDa polypeptide, PetD), cytochrome f and the Rieske protein, while the 4 small subunits are PetG, PetL, PetM and PetN. The complex functions as a dimer. The cofactor is heme b. Heme c serves as cofactor.

The protein resides in the plastid. The protein localises to the chloroplast thylakoid membrane. In terms of biological role, component of the cytochrome b6-f complex, which mediates electron transfer between photosystem II (PSII) and photosystem I (PSI), cyclic electron flow around PSI, and state transitions. This Amborella trichopoda protein is Cytochrome b6.